The chain runs to 366 residues: UPF0324 membrane protein RSc1111 (366 aa).

A run of 8 helical transmembrane segments spans residues Leu21–Ala43, Leu103–Val125, Ala137–Val159, Ala169–Ala191, Val198–Ala220, Val240–Glu262, Trp283–His305, and Ala343–Ala365.

This sequence belongs to the UPF0324 family.

Its subcellular location is the cell membrane. The chain is UPF0324 membrane protein RSc1111 from Ralstonia nicotianae (strain ATCC BAA-1114 / GMI1000) (Ralstonia solanacearum).